The chain runs to 495 residues: UDP-N-acetylmuramoyl-L-alanyl-D-glutamate--2,6-diaminopimelate ligase (495 aa).

Residues L27, S29, and 44–46 (HKA) each bind UDP-N-acetyl-alpha-D-muramoyl-L-alanyl-D-glutamate. 116–122 (GTNGKTT) is a binding site for ATP. UDP-N-acetyl-alpha-D-muramoyl-L-alanyl-D-glutamate is bound by residues N157, 158–159 (TT), S185, Q191, and R193. K225 carries the N6-carboxylysine modification. Meso-2,6-diaminopimelate contacts are provided by residues R390, 414–417 (DNPR), G465, and E469. The Meso-diaminopimelate recognition motif signature appears at 414 to 417 (DNPR).

This sequence belongs to the MurCDEF family. MurE subfamily. Mg(2+) is required as a cofactor. In terms of processing, carboxylation is probably crucial for Mg(2+) binding and, consequently, for the gamma-phosphate positioning of ATP.

The protein resides in the cytoplasm. It catalyses the reaction UDP-N-acetyl-alpha-D-muramoyl-L-alanyl-D-glutamate + meso-2,6-diaminopimelate + ATP = UDP-N-acetyl-alpha-D-muramoyl-L-alanyl-gamma-D-glutamyl-meso-2,6-diaminopimelate + ADP + phosphate + H(+). It participates in cell wall biogenesis; peptidoglycan biosynthesis. Its function is as follows. Catalyzes the addition of meso-diaminopimelic acid to the nucleotide precursor UDP-N-acetylmuramoyl-L-alanyl-D-glutamate (UMAG) in the biosynthesis of bacterial cell-wall peptidoglycan. The chain is UDP-N-acetylmuramoyl-L-alanyl-D-glutamate--2,6-diaminopimelate ligase from Pectobacterium atrosepticum (strain SCRI 1043 / ATCC BAA-672) (Erwinia carotovora subsp. atroseptica).